Reading from the N-terminus, the 707-residue chain is MGKKQKENEAYGNSAKYDPSFRGPIKNRGCTDIICCVLFLVFILGYIVVGLVAWVYGDPRQVLYPRNSTGAYCGVGDNKDKPYVLYFNILSCAAAINVISIAENGLQCPTPQVCVSSCPQTPWVVEGFQLSNTVGDVYKEYRNFCVPAVSPDMVVMDSLQKGLCPSFLLPSTPALGRCFPLPNINFTLPEQLQINNTTVSKGISGLLDSINARDVSVKIFEDFAQSWYWILVALGVALVLSLLFILLLRLVAAPLVLLLIVGVLAVLAYGIYHCWQQYRELRDQGVSITQLGFTANLSAYQNVKETWLAALIILAVLEGVLLLMLIFLRQRIRIAIALLKEASRAVGQMMSTMFYPLVTFVLLVICIGYWAVTALYLATSGQPQYVYWVHNTSTPGCEKVLVNVSCDPMAPLNSSCPELKCTFTGYSSSGLAQRSLFNLQIYGILGLFWTVNWVLALGQCVLAGAFASFYWAFHKPRDIPTFPLSSAFIRTLRYHTGSLAFGALILTLVQIARVILEYIDHKLRGSQNPVARCIICCFKCCLWCLEKFIKFLNRNAYIMIAIYGKNFCVSAKNAFMLLMRNVVRVVVLDKVTDLLLFFGKLLVVGGVGVLSFFFFSGRIKGLGKDFKNPDLNYYWLPIMTSIMGAYVIASGFFSVFGMCVDTLFLCFLEDLERNDGSQERPYYMPKALLKILGKKNEVPTGGKNRKK.

Residues 1 to 32 (MGKKQKENEAYGNSAKYDPSFRGPIKNRGCTD) are Cytoplasmic-facing. Residues 33–53 (IICCVLFLVFILGYIVVGLVA) traverse the membrane as a helical segment. The Extracellular portion of the chain corresponds to 54-227 (WVYGDPRQVL…KIFEDFAQSW (174 aa)). Residues Asn-67, Asn-185, Asn-195, and Asn-196 are each glycosylated (N-linked (GlcNAc...) asparagine). Residues 228 to 248 (YWILVALGVALVLSLLFILLL) form a helical membrane-spanning segment. Over 249–250 (RL) the chain is Cytoplasmic. The chain crosses the membrane as a helical span at residues 251-271 (VAAPLVLLLIVGVLAVLAYGI). Residues 272–307 (YHCWQQYRELRDQGVSITQLGFTANLSAYQNVKETW) are Extracellular-facing. Asn-296 is a glycosylation site (N-linked (GlcNAc...) asparagine). The helical transmembrane segment at 308–328 (LAALIILAVLEGVLLLMLIFL) threads the bilayer. Over 329–356 (RQRIRIAIALLKEASRAVGQMMSTMFYP) the chain is Cytoplasmic. Residues 357–377 (LVTFVLLVICIGYWAVTALYL) traverse the membrane as a helical segment. The Extracellular portion of the chain corresponds to 378-452 (ATSGQPQYVY…GILGLFWTVN (75 aa)). Residues Asn-391, Asn-403, and Asn-413 are each glycosylated (N-linked (GlcNAc...) asparagine). A helical transmembrane segment spans residues 453-473 (WVLALGQCVLAGAFASFYWAF). The Cytoplasmic segment spans residues 474–498 (HKPRDIPTFPLSSAFIRTLRYHTGS). The helical transmembrane segment at 499–519 (LAFGALILTLVQIARVILEYI) threads the bilayer. The Extracellular segment spans residues 520–557 (DHKLRGSQNPVARCIICCFKCCLWCLEKFIKFLNRNAY). Residues 558–578 (IMIAIYGKNFCVSAKNAFMLL) traverse the membrane as a helical segment. The Cytoplasmic portion of the chain corresponds to 579-594 (MRNVVRVVVLDKVTDL). Residues 595-615 (LLFFGKLLVVGGVGVLSFFFF) form a helical membrane-spanning segment. The Extracellular portion of the chain corresponds to 616–635 (SGRIKGLGKDFKNPDLNYYW). A helical membrane pass occupies residues 636 to 656 (LPIMTSIMGAYVIASGFFSVF). Topologically, residues 657-707 (GMCVDTLFLCFLEDLERNDGSQERPYYMPKALLKILGKKNEVPTGGKNRKK) are cytoplasmic.

Belongs to the CTL (choline transporter-like) family. In terms of processing, N-glycosylated; N-glycosylation of Asn-67 and Asn-391 is required for a proper thiamine pyrophosphate uptake. As to expression, highly expressed in intestine, kidney and stomach. Also expressed in testis and lung.

It is found in the membrane. Its subcellular location is the apical cell membrane. It catalyses the reaction choline(out) + n H(+)(in) = choline(in) + n H(+)(out). The catalysed reaction is thiamine diphosphate(out) = thiamine diphosphate(in). Functionally, choline transporter that plays a role in the choline-acetylcholine system and is required to the efferent innervation of hair cells in the olivocochlear bundle for the maintenance of physiological function of outer hair cells and the protection of hair cells from acoustic injury. Also described as a thiamine pyrophosphate transporter in colon, may mediate the absorption of microbiota-generated thiamine pyrophosphate and contribute to host thiamine (vitamin B1) homeostasis. This chain is Choline transporter-like protein 4, found in Rattus norvegicus (Rat).